The following is a 73-amino-acid chain: UPF0057 membrane protein At4g30650 (73 aa).

2 consecutive transmembrane segments (helical) span residues 4-24 (NMEV…GVCL) and 37-57 (LVLT…VIVF).

This sequence belongs to the UPF0057 (PMP3) family.

The protein resides in the membrane. The protein is UPF0057 membrane protein At4g30650 of Arabidopsis thaliana (Mouse-ear cress).